A 91-amino-acid chain; its full sequence is Small ribosomal subunit protein bS20 (91 aa).

The tract at residues 1-28 is disordered; that stretch reads MANTASAEKRNRQAQKRRARNVQVRTGV.

The protein belongs to the bacterial ribosomal protein bS20 family.

Binds directly to 16S ribosomal RNA. The sequence is that of Small ribosomal subunit protein bS20 from Anaeromyxobacter dehalogenans (strain 2CP-1 / ATCC BAA-258).